The primary structure comprises 468 residues: Shaggy-related protein kinase theta (468 aa).

2 disordered regions span residues 1-53 (MNVM…DQST) and 91-112 (HANRGEEDKDMEPPIVNGCGTE). Residues 134–418 (YMAQRVVGTG…ALEACAHPFF (285 aa)) form the Protein kinase domain. Residues 140-148 (VGTGSFGVV) and Lys-163 contribute to the ATP site. Catalysis depends on Asp-259, which acts as the Proton acceptor. At Tyr-294 the chain carries Phosphotyrosine.

Belongs to the protein kinase superfamily. CMGC Ser/Thr protein kinase family. GSK-3 subfamily. Autophosphorylated mainly on threonine and serine residues. In terms of tissue distribution, in developing pollen.

It catalyses the reaction L-seryl-[protein] + ATP = O-phospho-L-seryl-[protein] + ADP + H(+). It carries out the reaction L-threonyl-[protein] + ATP = O-phospho-L-threonyl-[protein] + ADP + H(+). May mediate extracellular signals to regulate transcription in differentiating cells. The sequence is that of Shaggy-related protein kinase theta from Brassica napus (Rape).